Reading from the N-terminus, the 420-residue chain is Ribulose bisphosphate carboxylase (420 aa).

Lysine 155 acts as the Proton acceptor in catalysis. Lysine 157 is a binding site for substrate. Residues lysine 181, aspartate 183, and glutamate 184 each coordinate Mg(2+). Lysine 181 carries the N6-carboxylysine modification. Histidine 273 (proton acceptor) is an active-site residue. Substrate-binding positions include arginine 274, histidine 306, 343-345, and 365-368; these read SGG and QAGG.

The protein belongs to the RuBisCO large chain family. Type III subfamily. As to quaternary structure, homodimer or homodecamer. In contrast to form I RuBisCO, the form III RuBisCO is composed solely of large subunits. Mg(2+) is required as a cofactor.

The enzyme catalyses 2 (2R)-3-phosphoglycerate + 2 H(+) = D-ribulose 1,5-bisphosphate + CO2 + H2O. It carries out the reaction D-ribulose 1,5-bisphosphate + O2 = 2-phosphoglycolate + (2R)-3-phosphoglycerate + 2 H(+). In terms of biological role, catalyzes the addition of molecular CO(2) and H(2)O to ribulose 1,5-bisphosphate (RuBP), generating two molecules of 3-phosphoglycerate (3-PGA). Functions in an archaeal AMP degradation pathway, together with AMP phosphorylase and R15P isomerase. This Pyrococcus furiosus (strain ATCC 43587 / DSM 3638 / JCM 8422 / Vc1) protein is Ribulose bisphosphate carboxylase.